Consider the following 469-residue polypeptide: Protein RUFY3 (469 aa).

2 positions are modified to phosphothreonine: Thr5 and Thr12. Ser34 and Ser49 each carry phosphoserine. A Phosphothreonine modification is found at Thr51. The region spanning 95–227 (DSDYAPLQQF…IDANFCMKGE (133 aa)) is the RUN domain. 2 coiled-coil regions span residues 271–362 (NRHL…VEKE) and 422–463 (KSEL…AANK).

In terms of assembly, interacts with PAK1. Interacts (via C-terminus) with Ras-related Rab-5 proteins. Interacts (via C-terminus) with Ras-related Rap-2 proteins. Interacts with PIK3CA and PIK3R1. Interacts (via N-terminus) with FSCN1; this interaction induces neuron axon development. Interacts with DBN1. Interacts (via the second coiled coil) with GTP-, but not GDP-bound ARL8A and ARL8B. Interacts with dynactin/DCTN1 and the dynein intermediate chain DYNC1I1/2. Directly interacts with DYNC1LI1. Post-translationally, phosphorylated by PAK1. Isoform 1 is partially phosphorylated. As to expression, overexpressed in gastric cancer cells and tissues (at protein level).

It localises to the cytoplasm. Its subcellular location is the endomembrane system. The protein localises to the cell projection. It is found in the invadopodium. The protein resides in the perikaryon. It localises to the growth cone. Its subcellular location is the filopodium. The protein localises to the lamellipodium. It is found in the lysosome. Its function is as follows. ARL8 effector that promotes the coupling of endolysosomes to dynein-dynactin for retrograde transport along microtubules. Acts by binding both GTP-bound ARL8 and dynein-dynactin. In nonneuronal cells, promotes concentration of endolysosomes in the juxtanuclear area. In hippocampal neurons, drives retrograde transport of endolysosomes from the axon to the soma. Plays a role in the generation of neuronal polarity formation and axon growth. Implicated in the formation of a single axon by developing neurons. May inhibit the formation of additional axons by inhibition of PI3K in minor neuronal processes. Plays a role in the formation of F-actin-enriched protrusive structures at the cell periphery. Plays a role in cytoskeletal organization by regulating the subcellular localization of FSCN1 and DBN1 at axonal growth cones. This is Protein RUFY3 from Homo sapiens (Human).